A 211-amino-acid chain; its full sequence is MQVILLERVAKLGQMGEVVDVKPGYARNFLLPQGKALSASKANIEAFEQQKAQLEARNLETRKEAEALAAKLDGQQFIVIRSASDSGALYGSVTTRDAAEAATEAGFTVDRKQVVLSPIKELGLHAVQVVLHPEVDATIHLNVARSVEEAELQASGKSIQELAAEEEAAAEFEIQELFDDIGAAASEDEELAETAGVAPAEPSEEDDSAKA.

Residues 183-211 form a disordered region; sequence AAASEDEELAETAGVAPAEPSEEDDSAKA. Residues 202 to 211 are compositionally biased toward acidic residues; sequence PSEEDDSAKA.

The protein belongs to the bacterial ribosomal protein bL9 family.

Binds to the 23S rRNA. In Roseobacter denitrificans (strain ATCC 33942 / OCh 114) (Erythrobacter sp. (strain OCh 114)), this protein is Large ribosomal subunit protein bL9.